The following is a 201-amino-acid chain: Translation initiation factor IF-3 (201 aa).

The protein belongs to the IF-3 family. Monomer.

The protein localises to the cytoplasm. Its function is as follows. IF-3 binds to the 30S ribosomal subunit and shifts the equilibrium between 70S ribosomes and their 50S and 30S subunits in favor of the free subunits, thus enhancing the availability of 30S subunits on which protein synthesis initiation begins. In Prochlorococcus marinus (strain SARG / CCMP1375 / SS120), this protein is Translation initiation factor IF-3.